We begin with the raw amino-acid sequence, 1070 residues long: Duffy receptor (1070 aa).

A signal peptide spans 1–20 (MKGKNRSLFVLLVLLLLHKV). Residues 21-1007 (NNVLLERTIE…CFTKGGFKDK (987 aa)) are Extracellular-facing. The tract at residues 116-146 (YMEGKDGGDKTGEEKDGEHKTDSKTDNGKGA) is disordered. Residues 118 to 142 (EGKDGGDKTGEEKDGEHKTDSKTDN) are compositionally biased toward basic and acidic residues. A glycan (N-linked (GlcNAc...) asparagine) is linked at asparagine 183. Residues 211-521 (NTVMKNCNYK…AKKNTQEVVT (311 aa)) are pvRII region; mediates ACKR1 binding. Intrachain disulfides connect cysteine 217/cysteine 246 and cysteine 230/cysteine 237. N-linked (GlcNAc...) asparagine glycosylation is found at asparagine 255, asparagine 351, and asparagine 420. 4 cysteine pairs are disulfide-bonded: cysteine 300/cysteine 377, cysteine 415/cysteine 432, cysteine 427/cysteine 507, and cysteine 436/cysteine 505. 3 stretches are compositionally biased toward polar residues: residues 525–542 (NAAK…QPVD), 554–569 (THGN…TTGK), and 629–642 (GASN…TVEA). Residues 525–906 (NAAKSQATNS…HLNSNNNLSN (382 aa)) are disordered. A compositionally biased stretch (basic and acidic residues) spans 697–711 (ETGKGQDNDMAKATK). Positions 712–728 (DSSNSSDGTSSATGDTT) are enriched in low complexity. The N-linked (GlcNAc...) asparagine glycan is linked to asparagine 715. Positions 730–748 (AVDREINKGVPEDRDKTVG) are enriched in basic and acidic residues. N-linked (GlcNAc...) asparagine glycosylation occurs at asparagine 787. Residues 808–817 (LSKTESLEST) are compositionally biased toward low complexity. N-linked (GlcNAc...) asparagine glycosylation occurs at asparagine 825. Composition is skewed to basic and acidic residues over residues 835 to 849 (NGGK…DFKS) and 865 to 889 (AEGH…KDTF). Low complexity predominate over residues 895–906 (SHHLNSNNNLSN). 2 N-linked (GlcNAc...) asparagine glycosylation sites follow: asparagine 903 and asparagine 938. Residues 1008-1025 (TYFAAAGALLILLLLIAS) form a helical membrane-spanning segment. The Cytoplasmic portion of the chain corresponds to 1026–1070 (RKMIKNDSEEATFNEFEEYCDNIHRIPLMPNNIEHMQPSTPLDYS).

As to quaternary structure, homodimer; dimerization (via PvRII region) is promoted by the interaction with human ACKR1. Interacts (via PvRII region) with human ACKR1 (via N-terminal extracellular domain).

The protein resides in the membrane. Its function is as follows. Binds to the human erythrocyte Duffy blood group determinant (ACKR1). This is Duffy receptor (PVDR) from Plasmodium vivax (strain Salvador I).